A 496-amino-acid polypeptide reads, in one-letter code: NADH-ubiquinone oxidoreductase 51 kDa subunit, mitochondrial (496 aa).

The transit peptide at 1-30 (MISRAAAPSSSIASLSSRSLRAQAPAARSF) directs the protein to the mitochondrion. 98 to 107 (GRGGAGFPSG) is an NAD(+) binding site. 214–261 (GMGAYVCGEETSLIESIEGKAGKPRLKPPFPAAVGLFGCPSTVTNVET) contacts FMN. The [4Fe-4S] cluster site is built by cysteine 393, cysteine 396, cysteine 399, and cysteine 439.

This sequence belongs to the complex I 51 kDa subunit family. In terms of assembly, complex I is composed of about 40 different subunits. This is a component of the flavoprotein-sulfur (FP) fragment of the enzyme. FMN is required as a cofactor. Requires [4Fe-4S] cluster as cofactor.

It is found in the mitochondrion inner membrane. The enzyme catalyses a ubiquinone + NADH + 5 H(+)(in) = a ubiquinol + NAD(+) + 4 H(+)(out). Core subunit of the mitochondrial membrane respiratory chain NADH dehydrogenase (Complex I) that is believed to belong to the minimal assembly required for catalysis. Complex I functions in the transfer of electrons from NADH to the respiratory chain. The immediate electron acceptor for the enzyme is believed to be ubiquinone. This is NADH-ubiquinone oxidoreductase 51 kDa subunit, mitochondrial (NUO51) from Aspergillus niger.